The sequence spans 66 residues: Large ribosomal subunit protein bL35 (66 aa).

Positions 1–16 (MPKQKTHRASAKRFKR) are enriched in basic residues. Residues 1–20 (MPKQKTHRASAKRFKRTGSG) are disordered.

It belongs to the bacterial ribosomal protein bL35 family.

The chain is Large ribosomal subunit protein bL35 from Streptococcus uberis (strain ATCC BAA-854 / 0140J).